The following is a 392-amino-acid chain: Rhizopuspepsin-5 (392 aa).

Residues 1–21 form the signal peptide; it reads MKFSLISSCVALAVLVLSTEA. The propeptide at 22–69 is activation peptide; sequence APNGKKVNIPLTKNKDYKPNAKNAIQKVLAKYHRHRSTSSSSNSTSTD. The Peptidase A1 domain maps to 85–389; sequence YFGQVKVGTP…NPTVPQVQIA (305 aa). Asp-103 is a catalytic residue. A disulfide bond links Cys-116 and Cys-119. Asp-286 is a catalytic residue. An intrachain disulfide couples Cys-320 to Cys-353.

The protein belongs to the peptidase A1 family.

The enzyme catalyses Hydrolysis of proteins with broad specificity similar to that of pepsin A, preferring hydrophobic residues at P1 and P1'. Clots milk and activates trypsinogen. Does not cleave 4-Gln-|-His-5, but does cleave 10-His-|-Leu-11 and 12-Val-|-Glu-13 in B chain of insulin.. In Rhizopus niveus, this protein is Rhizopuspepsin-5.